Here is a 269-residue protein sequence, read N- to C-terminus: Expansin-B9 (269 aa).

Residues 1 to 24 form the signal peptide; sequence MGSLANNIMVVGAVLAALVVGGSC. Asn-34 carries an N-linked (GlcNAc...) asparagine glycan. The Expansin-like EG45 domain occupies 63–169; it reads GGACGIKNVN…RRVRCKYPAG (107 aa). 3 disulfide bridges follow: Cys-66–Cys-94, Cys-97–Cys-164, and Cys-102–Cys-108. The region spanning 183–264 is the Expansin-like CBD domain; it reads NYVAVLVKFV…NWRPDAVYTS (82 aa).

Belongs to the expansin family. Expansin B subfamily. Expressed in anthers and pollen.

The protein resides in the secreted. It is found in the cell wall. It localises to the membrane. Functionally, may aid fertilization by loosening the cell wall of the stigma and style, thereby facilitating penetration of the pollen tube. Acts selectively on grass cell walls, which are relatively poor in pectins and xyloglucans and rich in glucuronoarabinoxylans and (1-3),(1-4)-beta-D-glucans, when compared with cell walls of other angiosperms, including other monocots. This Zea mays (Maize) protein is Expansin-B9 (EXPB9).